The chain runs to 348 residues: Heat-inducible transcription repressor HrcA (348 aa).

The protein belongs to the HrcA family.

Its function is as follows. Negative regulator of class I heat shock genes (grpE-dnaK-dnaJ and groELS operons). Prevents heat-shock induction of these operons. This is Heat-inducible transcription repressor HrcA from Thermomicrobium roseum (strain ATCC 27502 / DSM 5159 / P-2).